The chain runs to 980 residues: Ras and Rab interactor 3 (980 aa).

The segment at 1–40 (MRRAEAPSSAHPAGPIPDAGKGEGEEDEEKDGTRLGLSTT) is disordered. The 96-residue stretch at 63–158 (WLQLGLGQAE…LLPFTLRLPQ (96 aa)) folds into the SH2 domain. The segment covering 247-260 (PLPTGSYPPRPTPA) has biased composition (pro residues). Disordered regions lie at residues 247–496 (PLPT…TGAS) and 509–560 (QHLQ…LEFS). Positions 261-271 (TPDATSPTSKG) are enriched in low complexity. Positions 274–308 (RRPPPPPPLPTVPPTGPARPLAPPVPPAGPLPNSP) are enriched in pro residues. Composition is skewed to polar residues over residues 406–422 (ISRT…TVSS) and 484–494 (QEASSEKQATG). Residues 514-523 (QSSSCPQSSP) show a composition bias toward low complexity. An interaction with RAB5B region spans residues 584 to 729 (FASVFHAFLS…TTTDLGVTTS (146 aa)). Residues 700–843 (HSRDGSLQQL…IKNYDKITVT (144 aa)) form the VPS9 domain. The Ras-associating domain maps to 865–962 (KARASRSSVQ…FHFVYRPQDS (98 aa)).

Belongs to the RIN (Ras interaction/interference) family. Interacts with CD2AP, RAB5B, RAB31 and BIN1.

It localises to the cytoplasm. Its subcellular location is the cytoplasmic vesicle. The protein resides in the early endosome. Its function is as follows. Ras effector protein that functions as a guanine nucleotide exchange (GEF) for RAB5B and RAB31, by exchanging bound GDP for free GTP. Required for normal RAB31 function. In Mus musculus (Mouse), this protein is Ras and Rab interactor 3 (Rin3).